The following is a 990-amino-acid chain: MPTDNENSMTNVEQAEKYWQQFLTAPALTDDDKAIAKQHHDVLLTAFARSSFLAETIIQKPSFVSRTVEQTVEQTVEQTTEQDSDEQLQKNVDKEASSPWVAMYRSALDITLETVKTEDDLLKALREYRNQEMARVTFLDVLNKQDISTSLERVSALADVLLTGAYHWIYQHLAIRYGTPQNNGEDMHMYILGMGKLGGKELNFSSDIDLIFSYPEKGETQGGRKSIEHQQFFTKLAQKLIQALNKITNDGQVYRVDMRLRPFGDSGPLVMHFAALEDYYQDQGRHWERFAMVKARVINDDNSEDVKWLNSILHPFTFRRYLDFTTLDALRNMKKLIATEIRRRRLNNNIKLGAGGIREVEFFAQSFQLIHGGREPALQSKSLLRTLDALTELDIVEKDVTEQLKHDYLFLRKVEHTLQQCQDRQTQTLPDSAWQQAALIEVMGFDSYSTFLNQLDATMARIHGHFNELVEESQDSHSDEDQLFIACQDAWRLSLQEEEFAETFSEHLSSKDITGVYPILVAFKDKQRNYRIGQKGEDTLNKLLPEILYVLINQHPNHISQVLKRLLGVIEAITGRTTYLDLLLENPDVLKQLVKLCERSDWIAQEIKRFPLLLDELLTPLYLGQQNTDIHTSKKEYQLELRETMLRIEQDDVEMLMDGLRQFKLCQQLRIAASDISESLPVNNVSDKLTVLAEVILEHVVNAAWMQMRQRYGVPSHLEGNDKGFAVIGYGKLGGYELGYGSDLDLVFLHNAPRGISTDGNKSLEAQQFYIKLAQRIMHLLNTKTLFGQLYETDLRLRPSGNAGLLCCHIDGFEKYQTEEAWTWEHQALVRARAICGDVGLLKDFTRVRHTILSQVRDSKSLATDVCKMRLKMREHLLSKNNDKVDLKQCVGGITDIEFMAQYLVLANAQSADSMTTYPDNLRIFDTAVKARIIDPSTASKLQKAYLKLREQYHHLTLADTKYADQSEELDAIREQVRQHWDTLFGTCSE.

Positions 1–474 (MPTDNENSMT…HFNELVEESQ (474 aa)) are adenylyl removase. The interval 484–990 (FIACQDAWRL…WDTLFGTCSE (507 aa)) is adenylyl transferase.

It belongs to the GlnE family. The cofactor is Mg(2+).

It catalyses the reaction [glutamine synthetase]-O(4)-(5'-adenylyl)-L-tyrosine + phosphate = [glutamine synthetase]-L-tyrosine + ADP. The enzyme catalyses [glutamine synthetase]-L-tyrosine + ATP = [glutamine synthetase]-O(4)-(5'-adenylyl)-L-tyrosine + diphosphate. Functionally, involved in the regulation of glutamine synthetase GlnA, a key enzyme in the process to assimilate ammonia. When cellular nitrogen levels are high, the C-terminal adenylyl transferase (AT) inactivates GlnA by covalent transfer of an adenylyl group from ATP to specific tyrosine residue of GlnA, thus reducing its activity. Conversely, when nitrogen levels are low, the N-terminal adenylyl removase (AR) activates GlnA by removing the adenylyl group by phosphorolysis, increasing its activity. The regulatory region of GlnE binds the signal transduction protein PII (GlnB) which indicates the nitrogen status of the cell. In Alteromonas mediterranea (strain DSM 17117 / CIP 110805 / LMG 28347 / Deep ecotype), this protein is Bifunctional glutamine synthetase adenylyltransferase/adenylyl-removing enzyme.